We begin with the raw amino-acid sequence, 195 residues long: ATP-dependent Clp protease proteolytic subunit (195 aa).

The active-site Nucleophile is S94. The active site involves H119.

This sequence belongs to the peptidase S14 family. Component of the chloroplastic Clp protease core complex.

It is found in the plastid. It localises to the chloroplast stroma. It catalyses the reaction Hydrolysis of proteins to small peptides in the presence of ATP and magnesium. alpha-casein is the usual test substrate. In the absence of ATP, only oligopeptides shorter than five residues are hydrolyzed (such as succinyl-Leu-Tyr-|-NHMec, and Leu-Tyr-Leu-|-Tyr-Trp, in which cleavage of the -Tyr-|-Leu- and -Tyr-|-Trp bonds also occurs).. Functionally, cleaves peptides in various proteins in a process that requires ATP hydrolysis. Has a chymotrypsin-like activity. Plays a major role in the degradation of misfolded proteins. The polypeptide is ATP-dependent Clp protease proteolytic subunit (Cycas taitungensis (Prince sago)).